Consider the following 876-residue polypeptide: Alanine--tRNA ligase (876 aa).

Zn(2+) is bound by residues His-564, His-568, Cys-666, and His-670.

This sequence belongs to the class-II aminoacyl-tRNA synthetase family. Homotetramer. Zn(2+) is required as a cofactor.

The protein resides in the cytoplasm. It carries out the reaction tRNA(Ala) + L-alanine + ATP = L-alanyl-tRNA(Ala) + AMP + diphosphate. Its function is as follows. Catalyzes the attachment of alanine to tRNA(Ala) in a two-step reaction: alanine is first activated by ATP to form Ala-AMP and then transferred to the acceptor end of tRNA(Ala). Also edits incorrectly charged Ser-tRNA(Ala) and Gly-tRNA(Ala) via its editing domain. The sequence is that of Alanine--tRNA ligase from Salmonella paratyphi A (strain ATCC 9150 / SARB42).